Reading from the N-terminus, the 115-residue chain is U3-lycotoxin-Ls1e (115 aa).

An N-terminal signal peptide occupies residues 1–20 (MKFVLLFGVLSLTLFSYSSA). Positions 21-44 (EMLDDFDQADEDELLSLIEKEEAR) are excised as a propeptide. 4 disulfide bridges follow: Cys48–Cys63, Cys55–Cys72, Cys62–Cys87, and Cys74–Cys85.

Belongs to the neurotoxin 19 (CSTX) family. 01 subfamily. Expressed by the venom gland.

It localises to the secreted. In Lycosa singoriensis (Wolf spider), this protein is U3-lycotoxin-Ls1e.